The sequence spans 146 residues: Large ribosomal subunit protein bL19 (146 aa).

Belongs to the bacterial ribosomal protein bL19 family.

This protein is located at the 30S-50S ribosomal subunit interface and may play a role in the structure and function of the aminoacyl-tRNA binding site. The protein is Large ribosomal subunit protein bL19 of Bartonella henselae (strain ATCC 49882 / DSM 28221 / CCUG 30454 / Houston 1) (Rochalimaea henselae).